A 213-amino-acid polypeptide reads, in one-letter code: Ubiquitin-conjugating enzyme E2 S (213 aa).

The 147-residue stretch at 13–159 (QIIRQVAKEV…ARMMTEIHAK (147 aa)) folds into the UBC core domain. C97 (glycyl thioester intermediate) is an active-site residue. The tract at residues 157–213 (HAKPTTKTAPTKNEETNCPSTSGTQSTSEGPMAKKHAGDKNAAEKKKKEKKRALRRL) is disordered. Polar residues predominate over residues 174-185 (CPSTSGTQSTSE). Basic and acidic residues predominate over residues 192 to 202 (HAGDKNAAEKK). Residues 203-213 (KKEKKRALRRL) are compositionally biased toward basic residues.

It belongs to the ubiquitin-conjugating enzyme family.

The enzyme catalyses S-ubiquitinyl-[E1 ubiquitin-activating enzyme]-L-cysteine + [E2 ubiquitin-conjugating enzyme]-L-cysteine = [E1 ubiquitin-activating enzyme]-L-cysteine + S-ubiquitinyl-[E2 ubiquitin-conjugating enzyme]-L-cysteine.. It participates in protein modification; protein ubiquitination. Catalyzes the covalent attachment of ubiquitin to other proteins. Acts as an essential factor of the anaphase promoting complex/cyclosome (APC/C), a cell cycle-regulated ubiquitin ligase that controls progression through mitosis. Acts by specifically elongating polyubiquitin chains initiated by the E2 enzyme UBCH10 on APC/C substrates, enhancing the degradation of APC/C substrates by the proteasome and promoting mitotic exit. In Branchiostoma floridae (Florida lancelet), this protein is Ubiquitin-conjugating enzyme E2 S.